The primary structure comprises 169 residues: Nucleoside diphosphate kinase 3 (169 aa).

ADP-binding residues include lysine 29, arginine 105, threonine 111, arginine 122, valine 129, and asparagine 132. The active-site Pros-phosphohistidine intermediate is histidine 135.

Belongs to the NDK family. Homohexamer. Interacts (via its N-terminal region) with KAT5; this interaction enables recruitment of NME3 at DNA damage sites where it plays a role in the repair of DNA. Found in association with several ciliary nephronophthisis proteins, including NEK8, CEP164, ANKS6. Mg(2+) is required as a cofactor.

It is found in the mitochondrion outer membrane. The protein localises to the cytoplasm. Its subcellular location is the cytoskeleton. The protein resides in the cilium basal body. It carries out the reaction a 2'-deoxyribonucleoside 5'-diphosphate + ATP = a 2'-deoxyribonucleoside 5'-triphosphate + ADP. It catalyses the reaction a ribonucleoside 5'-diphosphate + ATP = a ribonucleoside 5'-triphosphate + ADP. Its function is as follows. Catalyzes the phosphorylation of ribonucleosides and deoxyribonucleoside diphosphates, other than ATP, into the corresponding triphosphates with ATP as the major phosphate donor. The ATP gamma phosphate is transferred to the nucleoside diphosphate beta phosphate via a ping-pong mechanism, using a phosphorylated active-site intermediate. Through the catalyzed exchange of gamma-phosphate between di- and triphosphonucleosides participates in regulation of intracellular nucleotide homeostasis. Inhibits granulocyte differentiation. May be required for ciliary function during renal development. Independently of its kinase activity, facilitates mitochondrial tethering prior to membrane fusion through its direct membrane-binding and hexamerization. Implicated in repair of both single- and double-stranded breaks in DNA through its association with the ribonucleotide reductase complex (RNR complex) via its interaction with the histone acetyltransferase KAT5, this interaction enables recruitment of NME3 at DNA damage sites where it plays a role in the repair of DNA, independently of its kinase activity. This is Nucleoside diphosphate kinase 3 from Homo sapiens (Human).